We begin with the raw amino-acid sequence, 340 residues long: Protein-arginine kinase (340 aa).

The 222-residue stretch at 21–242 (VVLSSRIRLA…EQIIMQERVA (222 aa)) folds into the Phosphagen kinase C-terminal domain. Residues 24–28 (SSRIR), H79, R113, 164–168 (RASVM), and 195–200 (RGIYGE) contribute to the ATP site.

Belongs to the ATP:guanido phosphotransferase family.

It carries out the reaction L-arginyl-[protein] + ATP = N(omega)-phospho-L-arginyl-[protein] + ADP + H(+). Functionally, catalyzes the specific phosphorylation of arginine residues in proteins. The polypeptide is Protein-arginine kinase (Listeria welshimeri serovar 6b (strain ATCC 35897 / DSM 20650 / CCUG 15529 / CIP 8149 / NCTC 11857 / SLCC 5334 / V8)).